The sequence spans 653 residues: Hepatocyte growth factor activator serine protease (653 aa).

The signal sequence occupies residues Met1–Pro34. A disordered region spans residues Pro34–Leu98. Positions Gln35–Arg369 are cleaved as a propeptide — removed in mature form. Residues Asn39, Asn47, and Asn63 are each glycosylated (N-linked (GlcNAc...) asparagine). Residues Asn47 to Val59 are compositionally biased toward low complexity. The Fibronectin type-II domain occupies Glu100 to Glu147. Intrachain disulfides connect Cys105–Cys130, Cys119–Cys145, Cys161–Cys172, Cys166–Cys183, Cys185–Cys194, Cys199–Cys227, Cys225–Cys234, Cys242–Cys253, Cys247–Cys264, Cys266–Cys275, Cys283–Cys364, Cys304–Cys346, Cys335–Cys359, Cys392–Cys519, Cys430–Cys446, Cys438–Cys508, Cys533–Cys602, Cys565–Cys581, and Cys592–Cys620. The EGF-like 1 domain maps to Ile157–Gly195. The 41-residue stretch at Glu197 to Thr237 folds into the Fibronectin type-I domain. Residues His238–Asn276 form the EGF-like 2 domain. The region spanning Cys283 to Cys364 is the Kringle domain. N-linked (GlcNAc...) asparagine glycosylation occurs at Asn287. In terms of domain architecture, Peptidase S1 spans Ile406–Arg644. Residue His445 is the Charge relay system of the active site. N-linked (GlcNAc...) asparagine glycosylation occurs at Asn466. The active-site Charge relay system is Asp495. Asn544 is a glycosylation site (N-linked (GlcNAc...) asparagine). Ser596 serves as the catalytic Charge relay system.

The protein belongs to the peptidase S1 family. In terms of assembly, heterodimer of a short chain and a long chain linked by a disulfide bond. In terms of processing, the active form of HGFAC presents in the serum is derived from the COOH-terminal region of the precursor by the cleavage of bonds between Arg-369 and Val-370 and Arg-405 and Ile-406.

The protein resides in the secreted. Its function is as follows. Serine protease that hydrolyzes the inactive zymogen hepatocyte growth factor (HGFsc) to an activated disulfide-linked heterodimer, then initiating hepatocyte growth factor receptor signaling pathway. The sequence is that of Hepatocyte growth factor activator serine protease from Mus musculus (Mouse).